Reading from the N-terminus, the 381-residue chain is Queuine tRNA-ribosyltransferase (381 aa).

The active-site Proton acceptor is aspartate 92. Substrate contacts are provided by residues 92-96 (DSGGF), aspartate 146, glutamine 190, and glycine 217. The RNA binding stretch occupies residues 248-254 (GVGRPED). The active-site Nucleophile is the aspartate 267. The RNA binding; important for wobble base 34 recognition stretch occupies residues 272–276 (TRNAR). Positions 305, 307, 310, and 337 each coordinate Zn(2+).

This sequence belongs to the queuine tRNA-ribosyltransferase family. As to quaternary structure, homodimer. Within each dimer, one monomer is responsible for RNA recognition and catalysis, while the other monomer binds to the replacement base PreQ1. The cofactor is Zn(2+).

It carries out the reaction 7-aminomethyl-7-carbaguanine + guanosine(34) in tRNA = 7-aminomethyl-7-carbaguanosine(34) in tRNA + guanine. It functions in the pathway tRNA modification; tRNA-queuosine biosynthesis. Catalyzes the base-exchange of a guanine (G) residue with the queuine precursor 7-aminomethyl-7-deazaguanine (PreQ1) at position 34 (anticodon wobble position) in tRNAs with GU(N) anticodons (tRNA-Asp, -Asn, -His and -Tyr). Catalysis occurs through a double-displacement mechanism. The nucleophile active site attacks the C1' of nucleotide 34 to detach the guanine base from the RNA, forming a covalent enzyme-RNA intermediate. The proton acceptor active site deprotonates the incoming PreQ1, allowing a nucleophilic attack on the C1' of the ribose to form the product. After dissociation, two additional enzymatic reactions on the tRNA convert PreQ1 to queuine (Q), resulting in the hypermodified nucleoside queuosine (7-(((4,5-cis-dihydroxy-2-cyclopenten-1-yl)amino)methyl)-7-deazaguanosine). The sequence is that of Queuine tRNA-ribosyltransferase from Xanthomonas euvesicatoria pv. vesicatoria (strain 85-10) (Xanthomonas campestris pv. vesicatoria).